A 146-amino-acid chain; its full sequence is Hemoglobin subunit beta (146 aa).

T1 is modified (blocked amino end (Thr)). The Globin domain maps to 2-146; it reads HWTAEERHYI…VAHALTLQYH (145 aa). Residues H63 and H92 each contribute to the heme b site.

Belongs to the globin family. As to quaternary structure, heterotetramer of two alpha chains and two beta chains. In terms of tissue distribution, red blood cells.

Functionally, involved in oxygen transport from the lung to the various peripheral tissues. This Caretta caretta (Loggerhead sea turtle) protein is Hemoglobin subunit beta (HBB).